The sequence spans 100 residues: Cell division topological specificity factor (100 aa).

Belongs to the MinE family.

Its function is as follows. Prevents the cell division inhibition by proteins MinC and MinD at internal division sites while permitting inhibition at polar sites. This ensures cell division at the proper site by restricting the formation of a division septum at the midpoint of the long axis of the cell. The chain is Cell division topological specificity factor from Synechococcus sp. (strain JA-2-3B'a(2-13)) (Cyanobacteria bacterium Yellowstone B-Prime).